We begin with the raw amino-acid sequence, 372 residues long: tRNA-specific 2-thiouridylase MnmA (372 aa).

ATP-binding positions include 16–23 (GMSGGVDS) and Met-42. Positions 102-104 (NPD) are interaction with target base in tRNA. The Nucleophile role is filled by Cys-107. A disulfide bridge links Cys-107 with Cys-205. Gly-132 serves as a coordination point for ATP. Residues 155–157 (KDQ) form an interaction with tRNA region. Residue Cys-205 is the Cysteine persulfide intermediate of the active site. The segment at 317–318 (RY) is interaction with tRNA.

It belongs to the MnmA/TRMU family.

The protein localises to the cytoplasm. It carries out the reaction S-sulfanyl-L-cysteinyl-[protein] + uridine(34) in tRNA + AH2 + ATP = 2-thiouridine(34) in tRNA + L-cysteinyl-[protein] + A + AMP + diphosphate + H(+). In terms of biological role, catalyzes the 2-thiolation of uridine at the wobble position (U34) of tRNA, leading to the formation of s(2)U34. The polypeptide is tRNA-specific 2-thiouridylase MnmA (Shewanella sp. (strain MR-4)).